The sequence spans 213 residues: Orotate phosphoribosyltransferase (213 aa).

Lysine 26 lines the 5-phospho-alpha-D-ribose 1-diphosphate pocket. 34–35 lines the orotate pocket; that stretch reads FF. 5-phospho-alpha-D-ribose 1-diphosphate-binding positions include 72-73, arginine 99, lysine 100, lysine 103, histidine 105, and 124-132; these read YK and DDVITAGTA. Orotate-binding residues include threonine 128 and arginine 156.

The protein belongs to the purine/pyrimidine phosphoribosyltransferase family. PyrE subfamily. As to quaternary structure, homodimer. Mg(2+) serves as cofactor.

It carries out the reaction orotidine 5'-phosphate + diphosphate = orotate + 5-phospho-alpha-D-ribose 1-diphosphate. It functions in the pathway pyrimidine metabolism; UMP biosynthesis via de novo pathway; UMP from orotate: step 1/2. Its function is as follows. Catalyzes the transfer of a ribosyl phosphate group from 5-phosphoribose 1-diphosphate to orotate, leading to the formation of orotidine monophosphate (OMP). The chain is Orotate phosphoribosyltransferase from Haemophilus influenzae (strain 86-028NP).